The chain runs to 198 residues: Cyclin-dependent kinase inhibitor 1B (198 aa).

The span at 1-11 (MSNVRVSNGSP) shows a compositional bias: polar residues. Residues 1–34 (MSNVRVSNGSPSLERMDARQAEHPKPSACRNLFG) form a disordered region. Ser-10 carries the post-translational modification Phosphoserine; by UHMK1. Residues 14 to 25 (ERMDARQAEHPK) are compositionally biased toward basic and acidic residues. Residues 51–91 (DMEEASQRKWNFDFQNHKPLEGKYEWQEVEKGSLPEFYYRP) are interaction with CDK2. Tyr-74 is subject to Phosphotyrosine; by SRC. The disordered stretch occupies residues 85-198 (PEFYYRPPRP…KKPGLRRRQT (114 aa)). At Tyr-88 the chain carries Phosphotyrosine; by ABL, LYN, SRC and JAK2. At Tyr-89 the chain carries Phosphotyrosine. Residues 126-137 (EDTHLVDPKTDP) show a composition bias toward basic and acidic residues. The Nuclear localization signal motif lies at 153–169 (KRPATDDSSTQNKRANR). Residue Thr-157 is modified to Phosphothreonine; by CaMK1, PKB/AKT1 and PIM1. Thr-170 carries the phosphothreonine modification. Over residues 175 to 186 (SDGSPNAGSVEQ) the composition is skewed to polar residues. Thr-187 carries the phosphothreonine; by PKB/AKT1, CDK1 and CDK2 modification. Thr-198 bears the Phosphothreonine; by CaMK1, PKB/AKT1, RPS6KA1, RPS6KA3 and PIM1 mark.

Belongs to the CDI family. Forms a ternary complex composed of CCNE1, CDK2 and CDKN1B. Interacts directly with CCNE1; the interaction is inhibited by CDK2-dependent phosphorylation on Thr-187. Interacts with COPS5, subunit of the COP9 signalosome complex; the interaction leads to CDKN1B degradation. Interacts with NUP50; the interaction leads to nuclear import and degradation of phosphorylated CDKN1B. Interacts with CCND1 and SNX6. Interacts (Thr-198-phosphorylated form) with 14-3-3 proteins, binds strongly YWHAQ, weakly YWHAE and YWHAH, but not YWHAB nor YWHAZ; the interaction with YWHAQ results in translocation to the cytoplasm. Interacts with AKT1 and LYN; the interactions lead to cytoplasmic mislocation, phosphorylation of CDKN1B and inhibition of cell cycle arrest. Forms a ternary complex with CCNA2 and CDK2; CDKN1B inhibits the kinase activity of CDK2 through conformational rearrangements. Interacts (unphosphorylated form) with CDK2. Forms a complex with CDK2 and SPDYA, but does not directly interact with SPDYA. Forms a ternary complex composed of cyclin D, CDK4 and CDKN1B. Interacts (phosphorylated on Tyr-88 and Tyr-89) with CDK4; the interaction is required for cyclin D and CDK4 complex assembly, induces nuclear translocation and activates the CDK4 kinase activity. Interacts with GRB2. Interacts with PIM1. Identified in a complex with SKP1, SKP2 and CKS1B. Interacts with UHMK1; the interaction leads to cytoplasmic mislocation, phosphorylation of CDKN1B and inhibition of cell cycle arrest. Also interacts with CDK1. Dephosphorylated on Thr-187 by PPM1H, leading to CDKN1B stability. Interacts with HSPA8; the interaction may be associated with susceptibility to ubiquitination. In terms of processing, phosphorylated; phosphorylation occurs on serine, threonine and tyrosine residues. Phosphorylation on Ser-10 is the major site of phosphorylation in resting cells, takes place at the G(0)-G(1) phase and leads to protein stability. Phosphorylation on other sites is greatly enhanced by mitogens, growth factors, cMYC and in certain cancer cell lines. The phosphorylated form found in the cytoplasm is inactivate. Phosphorylation on Thr-198 is required for interaction with 14-3-3 proteins. Phosphorylation on Thr-187, by CDK1 and CDK2 leads to protein ubiquitination and proteasomal degradation. Tyrosine phosphorylation promotes this process. Phosphorylation by PKB/AKT1 can be suppressed by LY294002, an inhibitor of the catalytic subunit of PI3K. Phosphorylation on Tyr-88 and Tyr-89 has no effect on binding CDK2, but is required for binding CDK4. Dephosphorylated on tyrosine residues by G-CSF. Post-translationally, ubiquitinated; in the cytoplasm by the KPC complex (composed of RNF123/KPC1 and UBAC1/KPC2) and, in the nucleus, by SCF(SKP2). The latter requires prior phosphorylation on Thr-187. Ubiquitinated; by a TRIM21-containing SCF(SKP2)-like complex; leads to its degradation. Subject to degradation in the lysosome. Interaction with SNX6 promotes lysosomal degradation. As to expression, expressed in kidney (at protein level). Expressed in all tissues tested. Highest levels in skeletal muscle, lowest in liver and kidney.

It localises to the nucleus. The protein resides in the cytoplasm. Its subcellular location is the endosome. Its function is as follows. Important regulator of cell cycle progression. Inhibits the kinase activity of CDK2 bound to cyclin A, but has little inhibitory activity on CDK2 bound to SPDYA. Involved in G1 arrest. Potent inhibitor of cyclin E- and cyclin A-CDK2 complexes. Forms a complex with cyclin type D-CDK4 complexes and is involved in the assembly, stability, and modulation of CCND1-CDK4 complex activation. Acts either as an inhibitor or an activator of cyclin type D-CDK4 complexes depending on its phosphorylation state and/or stoichometry. The protein is Cyclin-dependent kinase inhibitor 1B of Homo sapiens (Human).